A 1024-amino-acid polypeptide reads, in one-letter code: Beta-galactosidase (1024 aa).

2 residues coordinate substrate: Asn-103 and Asp-202. Asp-202 provides a ligand contact to Na(+). Glu-417, His-419, and Glu-462 together coordinate Mg(2+). Residues Glu-462 and 538–541 contribute to the substrate site; that span reads EYAH. The active-site Proton donor is Glu-462. Catalysis depends on Glu-538, which acts as the Nucleophile. Asn-598 contributes to the Mg(2+) binding site. Residues Phe-602 and Asn-605 each contribute to the Na(+) site. Substrate is bound by residues Asn-605 and Trp-1000.

This sequence belongs to the glycosyl hydrolase 2 family. Homotetramer. Mg(2+) is required as a cofactor. Na(+) serves as cofactor.

It catalyses the reaction Hydrolysis of terminal non-reducing beta-D-galactose residues in beta-D-galactosides.. This Escherichia coli O6:H1 (strain CFT073 / ATCC 700928 / UPEC) protein is Beta-galactosidase.